The primary structure comprises 369 residues: Histidinol-phosphate aminotransferase 2 (369 aa).

Position 229 is an N6-(pyridoxal phosphate)lysine (Lys-229).

It belongs to the class-II pyridoxal-phosphate-dependent aminotransferase family. Histidinol-phosphate aminotransferase subfamily. In terms of assembly, homodimer. Requires pyridoxal 5'-phosphate as cofactor.

The enzyme catalyses L-histidinol phosphate + 2-oxoglutarate = 3-(imidazol-4-yl)-2-oxopropyl phosphate + L-glutamate. Its pathway is amino-acid biosynthesis; L-histidine biosynthesis; L-histidine from 5-phospho-alpha-D-ribose 1-diphosphate: step 7/9. The sequence is that of Histidinol-phosphate aminotransferase 2 (hisC2) from Pseudomonas aeruginosa (strain ATCC 15692 / DSM 22644 / CIP 104116 / JCM 14847 / LMG 12228 / 1C / PRS 101 / PAO1).